A 506-amino-acid polypeptide reads, in one-letter code: Anaerobic nitric oxide reductase transcription regulator NorR (506 aa).

D57 carries the post-translational modification 4-aspartylphosphate. The Sigma-54 factor interaction domain maps to 187 to 416 (MIGLSPAMTQ…LEHAIHRAVV (230 aa)). ATP is bound by residues 215–222 (GETGTGKE) and 278–287 (ADNGTLFLDE). Residues 481-500 (WAASARALETDVANLHRLAK) constitute a DNA-binding region (H-T-H motif).

Its pathway is nitrogen metabolism; nitric oxide reduction. Its function is as follows. Required for the expression of anaerobic nitric oxide (NO) reductase, acts as a transcriptional activator for at least the norVW operon. Activation also requires sigma-54. This chain is Anaerobic nitric oxide reductase transcription regulator NorR, found in Salmonella paratyphi A (strain ATCC 9150 / SARB42).